The primary structure comprises 180 residues: Nucleoside-triphosphatase THEP1 (180 aa).

ATP-binding positions include 8–15 (GPVGSIKA) and 100–107 (VIIIDELG).

It belongs to the THEP1 NTPase family.

It catalyses the reaction a ribonucleoside 5'-triphosphate + H2O = a ribonucleoside 5'-diphosphate + phosphate + H(+). Its function is as follows. Has nucleotide phosphatase activity towards ATP, GTP, CTP, TTP and UTP. May hydrolyze nucleoside diphosphates with lower efficiency. The chain is Nucleoside-triphosphatase THEP1 from Picrophilus torridus (strain ATCC 700027 / DSM 9790 / JCM 10055 / NBRC 100828 / KAW 2/3).